The chain runs to 582 residues: MARKHAIWRFITLIGTVYCSSQVEHYDTFELEPGDQIILFPFIFKGNNIIALSTTRYRDLDRKRTYLVEDVIDFLGSISHVIWNFTVGRIVCADDNRFQRSFDEIMEGYLKEISLDATKIYMKGNKSFGELLEMIYERMFKFNDKRGNYILKYGSDITKKANDMIEDMPHDLDKKKKEEWEVFLNGIKKCGESFRDTEKWRQLIELEKIACNACKEICLDLKEEELMGLFAEGIMRKSLKVKLGEDEISSRGYLEYITISAKVLLGARKEHGGEVMKELVMQMLLGKKGEEIDKRYVDRVAGVVRERQRRREREIEKNMKELLRDEEKAKSKKKGKKKSVGVSEAKEEEKKESGTEEVEASEEVGIPSVEVGGARRKTGKKSKGDQKRFKIHSRVLRWRKSPEKIKEEWDRGSEERWKGRSLEEIKEQKIVHDITGVLELLRSEDADRFFMDAGEHMKGGSERQRMVAIGALETGGQRMTGVVEVGTFKDGDGCPVVYHLRFRPTSIGSIGDVINPGVVEASDVGRVDEGEECEDADKFVYPKGVRFETVKETGSFQIVWKNPSDTSEVLRRLIVYCRPCVI.

A disordered region spans residues 326-386 (EEKAKSKKKG…KTGKKSKGDQ (61 aa)). Positions 330 to 339 (KSKKKGKKKS) are enriched in basic residues. Residues 344–354 (EAKEEEKKESG) are compositionally biased toward basic and acidic residues.

The protein belongs to the UPF0329 family.

This Encephalitozoon cuniculi (strain GB-M1) (Microsporidian parasite) protein is UPF0329 protein ECU07_0070.